Reading from the N-terminus, the 171-residue chain is Shikimate kinase (171 aa).

Residue 14-19 (GAGKST) participates in ATP binding. S18 contributes to the Mg(2+) binding site. Positions 36, 60, and 82 each coordinate substrate. R120 provides a ligand contact to ATP. Position 139 (R139) interacts with substrate. Q156 contacts ATP.

This sequence belongs to the shikimate kinase family. In terms of assembly, monomer. The cofactor is Mg(2+).

It is found in the cytoplasm. The enzyme catalyses shikimate + ATP = 3-phosphoshikimate + ADP + H(+). It participates in metabolic intermediate biosynthesis; chorismate biosynthesis; chorismate from D-erythrose 4-phosphate and phosphoenolpyruvate: step 5/7. Functionally, catalyzes the specific phosphorylation of the 3-hydroxyl group of shikimic acid using ATP as a cosubstrate. This is Shikimate kinase from Shewanella loihica (strain ATCC BAA-1088 / PV-4).